Here is a 449-residue protein sequence, read N- to C-terminus: Cortexillin-2 (449 aa).

The interval 1–231 is actin-binding; it reads MTDLHKEWEK…ILYTSLFFHA (231 aa). Calponin-homology (CH) domains follow at residues 10-119 and 128-233; these read KVQE…RKYR and KSSE…HAYR. Coiled-coil stretches lie at residues 232–364 and 408–441; these read YRAK…AEGL and QFEEQAKRLGSKVENENISLEKYLSLKEEELKSA.

It belongs to the cortexillin family. As to quaternary structure, homodimer; parallel.

It localises to the cytoplasm. The protein localises to the cytoskeleton. In terms of biological role, actin-bundling protein. When linked to F-actin the actin filaments form preferentially anti-parallel bundles that associate into meshworks. Plays a major role in cytokinesis. The chain is Cortexillin-2 (ctxB) from Heterostelium pallidum (strain ATCC 26659 / Pp 5 / PN500) (Cellular slime mold).